We begin with the raw amino-acid sequence, 811 residues long: Glycerol-3-phosphate acyltransferase (811 aa).

Positions 309–314 (HRSHMD) match the HXXXXD motif motif.

It belongs to the GPAT/DAPAT family.

Its subcellular location is the cell inner membrane. It catalyses the reaction sn-glycerol 3-phosphate + an acyl-CoA = a 1-acyl-sn-glycero-3-phosphate + CoA. The protein operates within phospholipid metabolism; CDP-diacylglycerol biosynthesis; CDP-diacylglycerol from sn-glycerol 3-phosphate: step 1/3. The sequence is that of Glycerol-3-phosphate acyltransferase (plsB) from Vibrio cholerae serotype O1 (strain ATCC 39315 / El Tor Inaba N16961).